The primary structure comprises 79 residues: Methionine-rich peptide X (79 aa).

The N-terminal stretch at 1-22 is a signal peptide; that stretch reads MKKLAAVMLTSCLMVAVGASFA. The disordered stretch occupies residues 37 to 79; that stretch reads KKDDMAKDEMKKDSMAKDGMKKDAMKKDAMMKKDGMTKDEMKK.

Protein is oxidized (possibly on Met residues) when cells are exposed to chlorite or hypochlorite; initially the protein is highly oxidized, by 50 minutes all protein is in the reduced form.

The protein localises to the periplasm. Serves as an oxidative stress sink, specifically for chlorite and hypochlorite. The protein is Methionine-rich peptide X of Azospira oryzae (strain ATCC BAA-33 / DSM 13638 / PS) (Dechlorosoma suillum).